The primary structure comprises 377 residues: Actin-related protein T2 (377 aa).

The protein belongs to the actin family.

Its subcellular location is the cytoplasm. It is found in the cytoskeleton. This is Actin-related protein T2 (ACTRT2) from Macaca fascicularis (Crab-eating macaque).